Reading from the N-terminus, the 89-residue chain is MAISQEKKNEIIAKYARHEGDTGSAEVQIAVLTADINEINEHLRVHRKDFHSQRGLMKKIGHRRNLLAYLRKTDVQRYRDLIKSLGLRR.

It belongs to the universal ribosomal protein uS15 family. In terms of assembly, part of the 30S ribosomal subunit. Forms a bridge to the 50S subunit in the 70S ribosome, contacting the 23S rRNA.

Its function is as follows. One of the primary rRNA binding proteins, it binds directly to 16S rRNA where it helps nucleate assembly of the platform of the 30S subunit by binding and bridging several RNA helices of the 16S rRNA. Forms an intersubunit bridge (bridge B4) with the 23S rRNA of the 50S subunit in the ribosome. This chain is Small ribosomal subunit protein uS15, found in Pediococcus pentosaceus (strain ATCC 25745 / CCUG 21536 / LMG 10740 / 183-1w).